The sequence spans 211 residues: Imidazole glycerol phosphate synthase subunit HisH (211 aa).

The Glutamine amidotransferase type-1 domain maps to 3–211 (VIAVIDYDMG…VSQIKAPVLV (209 aa)). The Nucleophile role is filled by Cys-81. Catalysis depends on residues His-186 and Glu-188.

In terms of assembly, heterodimer of HisH and HisF.

It is found in the cytoplasm. It carries out the reaction 5-[(5-phospho-1-deoxy-D-ribulos-1-ylimino)methylamino]-1-(5-phospho-beta-D-ribosyl)imidazole-4-carboxamide + L-glutamine = D-erythro-1-(imidazol-4-yl)glycerol 3-phosphate + 5-amino-1-(5-phospho-beta-D-ribosyl)imidazole-4-carboxamide + L-glutamate + H(+). It catalyses the reaction L-glutamine + H2O = L-glutamate + NH4(+). The protein operates within amino-acid biosynthesis; L-histidine biosynthesis; L-histidine from 5-phospho-alpha-D-ribose 1-diphosphate: step 5/9. In terms of biological role, IGPS catalyzes the conversion of PRFAR and glutamine to IGP, AICAR and glutamate. The HisH subunit catalyzes the hydrolysis of glutamine to glutamate and ammonia as part of the synthesis of IGP and AICAR. The resulting ammonia molecule is channeled to the active site of HisF. This Cyanothece sp. (strain PCC 7425 / ATCC 29141) protein is Imidazole glycerol phosphate synthase subunit HisH.